Reading from the N-terminus, the 515-residue chain is Membrane-bound transcription factor site-2 protease (515 aa).

Residues 1 to 3 (MIP) lie on the Cytoplasmic side of the membrane. A helical transmembrane segment spans residues 4–24 (VSLLVVVVGGWTAVYLADLVL). Topologically, residues 25–74 (KSSVYFKHSYEDWLENNGLSISPFHIRWQTSIFNRAFYSWGRRKARMLYQ) are lumenal. 2 consecutive transmembrane segments (helical) span residues 75 to 95 (WFNF…FLLG) and 96 to 107 (KTLMQTLAQMMA). Residues 108–140 (DSPSPYSSSSSSSSSSSSSSSSSSSLHNEQVLQ) are Lumenal-facing. Residues 141 to 165 (VVVPGINLPVNQLTYFFAAVLISGV) traverse the membrane as a helical segment. Histidine 167 is a Zn(2+) binding site. Residue glutamate 168 is part of the active site. A run of 3 helical transmembrane segments spans residues 170 to 182 (GHGI…QVRF), 183 to 205 (NGFG…TTHL), and 225 to 247 (FVLA…PFYY). Residue histidine 171 coordinates Zn(2+). The Lumenal segment spans residues 248–442 (TGVGVLITEV…LPVIVETFVK (195 aa)). N-linked (GlcNAc...) asparagine glycosylation occurs at asparagine 333. Transmembrane regions (helical) follow at residues 443–460 (YLIS…VPCF) and 461–472 (ALDGQWILNSFL). At 473 to 488 (DATLTSVIGDNDVKDL) the chain is on the lumenal side. Residues 489–509 (IGFFILLGGSVLLAANVTLGL) form a helical membrane-spanning segment. The Cytoplasmic portion of the chain corresponds to 510–515 (WMVTAR).

The protein belongs to the peptidase M50A family. The cofactor is Zn(2+).

The protein localises to the membrane. The protein resides in the cytoplasm. It localises to the golgi apparatus membrane. The catalysed reaction is Cleaves several transcription factors that are type-2 transmembrane proteins within membrane-spanning domains. Known substrates include sterol regulatory element-binding protein (SREBP) -1, SREBP-2 and forms of the transcriptional activator ATF6. SREBP-2 is cleaved at the site 477-DRSRILL-|-CVLTFLCLSFNPLTSLLQWGGA-505. The residues Asn-Pro, 11 residues distal to the site of cleavage in the membrane-spanning domain, are important for cleavage by S2P endopeptidase. Replacement of either of these residues does not prevent cleavage, but there is no cleavage if both of these residues are replaced.. In terms of biological role, zinc metalloprotease that mediates intramembrane proteolysis of proteins such as ATF6, ATF6B, SREBF1/SREBP1 and SREBF2/SREBP2. Catalyzes the second step in the proteolytic activation of the sterol regulatory element-binding proteins (SREBPs) SREBF1/SREBP1 and SREBF2/SREBP2: cleaves SREBPs within the first transmembrane segment, thereby releasing the N-terminal segment with a portion of the transmembrane segment attached. Mature N-terminal SREBP fragments shuttle to the nucleus and activate gene transcription. Also mediates the second step in the proteolytic activation of the cyclic AMP-dependent transcription factor ATF-6 (ATF6 and ATF6B). Involved in intramembrane proteolysis during bone formation. In astrocytes and osteoblasts, upon DNA damage and ER stress, mediates the second step of the regulated intramembrane proteolytic activation of the transcription factor CREB3L1, leading to the inhibition of cell-cycle progression. This chain is Membrane-bound transcription factor site-2 protease (Mbtps2), found in Mus musculus (Mouse).